We begin with the raw amino-acid sequence, 229 residues long: Large ribosomal subunit protein uL1 (229 aa).

Belongs to the universal ribosomal protein uL1 family. Part of the 50S ribosomal subunit.

In terms of biological role, binds directly to 23S rRNA. The L1 stalk is quite mobile in the ribosome, and is involved in E site tRNA release. Protein L1 is also a translational repressor protein, it controls the translation of the L11 operon by binding to its mRNA. In Mycoplasmopsis pulmonis (strain UAB CTIP) (Mycoplasma pulmonis), this protein is Large ribosomal subunit protein uL1.